Consider the following 628-residue polypeptide: Chaperone protein HtpG (628 aa).

Positions 1–340 are a; substrate-binding; that stretch reads MSTETLQKET…SADLPLNVSR (340 aa). The segment at 341-557 is b; sequence EILQHSKDIE…EHDLSGNLER (217 aa). The c stretch occupies residues 558 to 628; sequence LLKAAGQKTP…FVRRVNAMLA (71 aa).

This sequence belongs to the heat shock protein 90 family. As to quaternary structure, homodimer.

The protein localises to the cytoplasm. In terms of biological role, molecular chaperone. Has ATPase activity. The polypeptide is Chaperone protein HtpG (Methylobacillus flagellatus (strain ATCC 51484 / DSM 6875 / VKM B-1610 / KT)).